A 526-amino-acid chain; its full sequence is Chaperonin GroEL, chloroplastic (526 aa).

ATP is bound by residues 29–32 (TLGP), 86–90 (DGTTT), glycine 412, 476–478 (DAA), and aspartate 492.

Belongs to the chaperonin (HSP60) family. In terms of assembly, forms a cylinder of 14 subunits composed of two heptameric rings stacked back-to-back. Interacts with the co-chaperonin GroES.

Its subcellular location is the plastid. The protein resides in the chloroplast. The enzyme catalyses ATP + H2O + a folded polypeptide = ADP + phosphate + an unfolded polypeptide.. Functionally, together with its co-chaperonin GroES, plays an essential role in assisting protein folding. The GroEL-GroES system forms a nano-cage that allows encapsulation of the non-native substrate proteins and provides a physical environment optimized to promote and accelerate protein folding. This is Chaperonin GroEL, chloroplastic from Cyanidioschyzon merolae (strain NIES-3377 / 10D) (Unicellular red alga).